The sequence spans 81 residues: Large ribosomal subunit protein bL31B (81 aa).

This sequence belongs to the bacterial ribosomal protein bL31 family. Type B subfamily. In terms of assembly, part of the 50S ribosomal subunit.

This chain is Large ribosomal subunit protein bL31B, found in Borreliella burgdorferi (strain ZS7) (Borrelia burgdorferi).